Here is a 488-residue protein sequence, read N- to C-terminus: Ribulose bisphosphate carboxylase large chain (488 aa).

Residues asparagine 127 and threonine 177 each coordinate substrate. The Proton acceptor role is filled by lysine 179. Lysine 181 lines the substrate pocket. Lysine 205, aspartate 207, and glutamate 208 together coordinate Mg(2+). Residue lysine 205 is modified to N6-carboxylysine. Residue histidine 297 is the Proton acceptor of the active site. Residues arginine 298, histidine 330, and serine 382 each coordinate substrate.

This sequence belongs to the RuBisCO large chain family. Type I subfamily. Heterohexadecamer of 8 large chains and 8 small chains. It depends on Mg(2+) as a cofactor.

It localises to the plastid. The protein resides in the chloroplast. The enzyme catalyses 2 (2R)-3-phosphoglycerate + 2 H(+) = D-ribulose 1,5-bisphosphate + CO2 + H2O. The catalysed reaction is D-ribulose 1,5-bisphosphate + O2 = 2-phosphoglycolate + (2R)-3-phosphoglycerate + 2 H(+). Its function is as follows. RuBisCO catalyzes two reactions: the carboxylation of D-ribulose 1,5-bisphosphate, the primary event in carbon dioxide fixation, as well as the oxidative fragmentation of the pentose substrate in the photorespiration process. Both reactions occur simultaneously and in competition at the same active site. This Pyropia yezoensis (Susabi-nori) protein is Ribulose bisphosphate carboxylase large chain.